The primary structure comprises 159 residues: Ribosomal RNA large subunit methyltransferase H (159 aa).

S-adenosyl-L-methionine is bound by residues Leu-76, Gly-108, and 127–132 (FGLLTL).

Belongs to the RNA methyltransferase RlmH family. In terms of assembly, homodimer.

The protein resides in the cytoplasm. The catalysed reaction is pseudouridine(1915) in 23S rRNA + S-adenosyl-L-methionine = N(3)-methylpseudouridine(1915) in 23S rRNA + S-adenosyl-L-homocysteine + H(+). In terms of biological role, specifically methylates the pseudouridine at position 1915 (m3Psi1915) in 23S rRNA. This Streptococcus pyogenes serotype M12 (strain MGAS2096) protein is Ribosomal RNA large subunit methyltransferase H.